Consider the following 333-residue polypeptide: tRNA (guanine(37)-N(1))/4-demethylwyosine(37)-methyltransferase Taw22 (333 aa).

Residues Arg-174, Phe-191, 213–214, and 243–244 contribute to the S-adenosyl-L-methionine site; these read EI and DV.

It belongs to the class I-like SAM-binding methyltransferase superfamily. TRM5/TYW2 family.

It is found in the cytoplasm. The catalysed reaction is guanosine(37) in tRNA + S-adenosyl-L-methionine = N(1)-methylguanosine(37) in tRNA + S-adenosyl-L-homocysteine + H(+). It catalyses the reaction 4-demethylwyosine(37) in tRNA(Phe) + S-adenosyl-L-methionine = isowyosine(37) in tRNA(Phe) + S-adenosyl-L-homocysteine + H(+). Functionally, catalyzes both the N1-methylation of guanosine and the C7-methylation of 4-demethylwyosine (imG-14) at position 37 in tRNA(Phe). This chain is tRNA (guanine(37)-N(1))/4-demethylwyosine(37)-methyltransferase Taw22, found in Pyrococcus abyssi (strain GE5 / Orsay).